The primary structure comprises 887 residues: Semaphorin-6B (887 aa).

A signal peptide spans 1 to 26; sequence MWTPRAPPPRPALLFLLLLLLRVTHG. Over 27 to 605 the chain is Extracellular; that stretch reads LFPDEPPPLS…VSVNLLVTSS (579 aa). Residues 32–525 form the Sema domain; it reads PPPLSVAPRD…FPRCVVRVPV (494 aa). An N-linked (GlcNAc...) asparagine glycan is attached at Asn-75. Cystine bridges form between Cys-117–Cys-127 and Cys-145–Cys-154. Asn-156, Asn-168, and Asn-292 each carry an N-linked (GlcNAc...) asparagine glycan. 2 cysteine pairs are disulfide-bonded: Cys-268–Cys-379 and Cys-293–Cys-338. N-linked (GlcNAc...) asparagine glycosylation is found at Asn-387, Asn-442, and Asn-463. 4 disulfide bridges follow: Cys-487/Cys-519, Cys-528/Cys-546, Cys-534/Cys-580, and Cys-538/Cys-554. Residues 606–626 traverse the membrane as a helical segment; sequence VAAFVVGAVVSGFSVGWFVGL. Over 627 to 887 the chain is Cytoplasmic; it reads RERRELARRK…TGERTAPPVP (261 aa). 3 disordered regions span residues 656-675, 697-717, and 759-887; these read LGER…GGPG, HGGP…TPLP, and APEQ…PPVP. The span at 662-674 shows a compositional bias: gly residues; it reads TGTGGRGGAGGGP. Arg-667 carries the post-translational modification Omega-N-methylarginine. Residues 707–717 are compositionally biased toward low complexity; sequence LLPTPEQTPLP.

The protein belongs to the semaphorin family.

The protein resides in the cell membrane. Its function is as follows. Functions as a cell surface repellent for mossy fibers of developing neurons in the hippocampus where it plays a role in axon guidance. May function through the PLXNA4 receptor expressed by mossy cell axons. This chain is Semaphorin-6B (Sema6b), found in Rattus norvegicus (Rat).